The primary structure comprises 204 residues: Probable calcium-binding protein CML46 (204 aa).

3 EF-hand domains span residues 72–106, 132–167, and 170–204; these read LEFQTSIKHEEYRDDDDDGLCREDVGMVMKSLGLS, PSLEEVKQAFDVFDENRDGFIDPIDLQRVLTILGLK, and SNLENCRRMIRSFDGSKDGRIDFYGFVKFMENNFC. Ca(2+)-binding residues include D145, N147, D149, and D156.

Functionally, potential calcium sensor. This Arabidopsis thaliana (Mouse-ear cress) protein is Probable calcium-binding protein CML46.